Consider the following 153-residue polypeptide: Prostaglandin E synthase (153 aa).

At 1–13 the chain is on the lumenal side; that stretch reads MPPPSLAMVSGQA. Residues 14–42 form a helical membrane-spanning segment; the sequence is LPAFLLCSTLLVIKMYAVAVITGQVRLRK. Residue Arg-39 coordinates glutathione. At 43-61 the chain is on the cytoplasmic side; it reads KAFANPEDALRHGGLQFHR. A helical transmembrane segment spans residues 62 to 91; sequence DDQDVERCLRAHRNDMETIYPFLFLGLVYS. 74–78 provides a ligand contact to glutathione; sequence RNDME. Residues 92-96 lie on the Lumenal side of the membrane; sequence FLGPD. Residues 97–120 traverse the membrane as a helical segment; that stretch reads PFVAQMHFLVFFLGRMVHTVAYLG. 2 residues coordinate glutathione: His-114 and Tyr-118. At 121-124 the chain is on the cytoplasmic side; the sequence is KLRA. The chain crosses the membrane as a helical span at residues 125–153; it reads PTRSLAYTVAQLPCASMALQIVWEAARHL. 127-131 contributes to the glutathione binding site; that stretch reads RSLAY.

Belongs to the MAPEG family. In terms of assembly, homotrimer. Glutathione serves as cofactor.

The protein localises to the membrane. The protein resides in the cytoplasm. Its subcellular location is the perinuclear region. It carries out the reaction prostaglandin H2 = prostaglandin E2. The enzyme catalyses 2-glyceryl-prostaglandin H2 = 2-glyceryl-prostaglandin E2. It catalyses the reaction prostaglandin G2 = (15S)-15-hydroperoxy-prostaglandin E2. The catalysed reaction is 1-chloro-2,4-dinitrobenzene + glutathione = 2,4-dinitrophenyl-S-glutathione + chloride + H(+). It carries out the reaction (5S)-hydroperoxy-(6E,8Z,11Z,14Z)-eicosatetraenoate + 2 glutathione = (5S)-hydroxy-(6E,8Z,11Z,14Z)-eicosatetraenoate + glutathione disulfide + H2O. Its pathway is lipid metabolism; prostaglandin biosynthesis. Terminal enzyme of the cyclooxygenase (COX)-2-mediated prostaglandin E2 (PGE2) biosynthetic pathway. Catalyzes the glutathione-dependent oxidoreduction of prostaglandin endoperoxide H2 (PGH2) to prostaglandin E2 (PGE2) in response to inflammatory stimuli. Plays a key role in inflammation response, fever and pain. Also catalyzes the oxidoreduction of endocannabinoids into prostaglandin glycerol esters and PGG2 into 15-hydroperoxy-PGE2. In addition, displays low glutathione transferase and glutathione-dependent peroxidase activities, toward 1-chloro-2,4-dinitrobenzene and 5-hydroperoxyicosatetraenoic acid (5-HPETE), respectively. This is Prostaglandin E synthase (PTGES) from Equus caballus (Horse).